The chain runs to 326 residues: Delta-aminolevulinic acid dehydratase (326 aa).

Residues Cys125, Cys127, and Cys135 each coordinate Zn(2+). The Schiff-base intermediate with substrate role is filled by Lys200. 5-aminolevulinate contacts are provided by Arg210 and Arg222. Residue Glu238 coordinates Mg(2+). The Schiff-base intermediate with substrate role is filled by Lys253. Ser279 contributes to the 5-aminolevulinate binding site.

It belongs to the ALAD family. Homooctamer. The cofactor is Zn(2+).

The catalysed reaction is 2 5-aminolevulinate = porphobilinogen + 2 H2O + H(+). Its pathway is porphyrin-containing compound metabolism; protoporphyrin-IX biosynthesis; coproporphyrinogen-III from 5-aminolevulinate: step 1/4. Functionally, catalyzes an early step in the biosynthesis of tetrapyrroles. Binds two molecules of 5-aminolevulinate per subunit, each at a distinct site, and catalyzes their condensation to form porphobilinogen. The protein is Delta-aminolevulinic acid dehydratase (hemB) of Methanothermobacter thermautotrophicus (strain ATCC 29096 / DSM 1053 / JCM 10044 / NBRC 100330 / Delta H) (Methanobacterium thermoautotrophicum).